Here is a 175-residue protein sequence, read N- to C-terminus: Major MR/P fimbria protein (175 aa).

Residues 1-23 (MKLNKLALVLGLGLSVVAGSALA) form the signal peptide. Residues cysteine 42 and cysteine 81 are joined by a disulfide bond.

Belongs to the fimbrial protein family.

The protein resides in the fimbrium. Major structural component of mannose-resistant/proteus-like fimbriae of P.mirabilis. The polypeptide is Major MR/P fimbria protein (mrpA) (Proteus mirabilis (strain HI4320)).